Here is a 168-residue protein sequence, read N- to C-terminus: Putative F-box protein At1g30945 (168 aa).

Positions 5 to 52 (KTFDSISNDLFLEILLRLSTKSIDRSRCVSKQWASILCSQDFTESEKF) constitute an F-box domain.

This is Putative F-box protein At1g30945 from Arabidopsis thaliana (Mouse-ear cress).